Here is a 212-residue protein sequence, read N- to C-terminus: tRNA (guanine-N(7)-)-methyltransferase (212 aa).

S-adenosyl-L-methionine is bound by residues Glu-44, Glu-69, Asp-96, and Asp-118. Asp-118 is an active-site residue. Position 122 (Lys-122) interacts with substrate. Residues Arg-124–Arg-129 are interaction with RNA. Substrate is bound by residues Asp-154 and Thr-192–Glu-195.

Belongs to the class I-like SAM-binding methyltransferase superfamily. TrmB family.

It carries out the reaction guanosine(46) in tRNA + S-adenosyl-L-methionine = N(7)-methylguanosine(46) in tRNA + S-adenosyl-L-homocysteine. It functions in the pathway tRNA modification; N(7)-methylguanine-tRNA biosynthesis. In terms of biological role, catalyzes the formation of N(7)-methylguanine at position 46 (m7G46) in tRNA. The chain is tRNA (guanine-N(7)-)-methyltransferase from Pediococcus pentosaceus (strain ATCC 25745 / CCUG 21536 / LMG 10740 / 183-1w).